Here is a 225-residue protein sequence, read N- to C-terminus: Ribose-5-phosphate isomerase A (225 aa).

A disordered region spans residues 1 to 20; sequence MKQSGGTEAQKRRAGKQAAD. Substrate-binding positions include 32–35, 86–89, and 98–101; these read TGST, DGAD, and KGGG. Glutamate 107 acts as the Proton acceptor in catalysis. Lysine 125 is a substrate binding site.

The protein belongs to the ribose 5-phosphate isomerase family. In terms of assembly, homodimer.

It catalyses the reaction aldehydo-D-ribose 5-phosphate = D-ribulose 5-phosphate. The protein operates within carbohydrate degradation; pentose phosphate pathway; D-ribose 5-phosphate from D-ribulose 5-phosphate (non-oxidative stage): step 1/1. Its function is as follows. Catalyzes the reversible conversion of ribose-5-phosphate to ribulose 5-phosphate. The sequence is that of Ribose-5-phosphate isomerase A from Natronomonas pharaonis (strain ATCC 35678 / DSM 2160 / CIP 103997 / JCM 8858 / NBRC 14720 / NCIMB 2260 / Gabara) (Halobacterium pharaonis).